The following is a 120-amino-acid chain: C-C motif chemokine 27 (120 aa).

An N-terminal signal peptide occupies residues 1–25 (MMEGLSPASSLPLLLLLLSPAPEAA). Intrachain disulfides connect Cys34–Cys63 and Cys35–Cys78.

This sequence belongs to the intercrine beta (chemokine CC) family. As to quaternary structure, monomer, dimer, and tetramer. Heparin avidly promotes oligomerization. Interacts with TNFAIP6 (via Link domain). As to expression, isoform 1 is predominantly expressed in placenta and weakly in skin. Isoform 2 is predominantly expressed in testes and brain, weakly in kidney and liver and even lower in heart and muscle. Low expression of both isoforms in other tissues.

It is found in the secreted. The protein resides in the nucleus. Functionally, chemotactic factor that attracts skin-associated memory T-lymphocytes. May play a role in mediating homing of lymphocytes to cutaneous sites. May play a role in cell migration during embryogenesis. Nuclear forms may facilitate cellular migration by inducing cytoskeletal relaxation. Binds to CCR10. This chain is C-C motif chemokine 27 (Ccl27), found in Mus musculus (Mouse).